The sequence spans 447 residues: UDP-N-acetylglucosamine 1-carboxyvinyltransferase (447 aa).

Position 27–28 (27–28) interacts with phosphoenolpyruvate; it reads KN. Arg97 provides a ligand contact to UDP-N-acetyl-alpha-D-glucosamine. Residue Cys121 is the Proton donor of the active site. 2-(S-cysteinyl)pyruvic acid O-phosphothioketal is present on Cys121. Residues 126-130, Asp314, and Val336 contribute to the UDP-N-acetyl-alpha-D-glucosamine site; that span reads RPVDL.

The protein belongs to the EPSP synthase family. MurA subfamily.

The protein localises to the cytoplasm. It catalyses the reaction phosphoenolpyruvate + UDP-N-acetyl-alpha-D-glucosamine = UDP-N-acetyl-3-O-(1-carboxyvinyl)-alpha-D-glucosamine + phosphate. It functions in the pathway cell wall biogenesis; peptidoglycan biosynthesis. Cell wall formation. Adds enolpyruvyl to UDP-N-acetylglucosamine. The chain is UDP-N-acetylglucosamine 1-carboxyvinyltransferase from Nostoc sp. (strain PCC 7120 / SAG 25.82 / UTEX 2576).